Reading from the N-terminus, the 192-residue chain is Phosphoheptose isomerase (192 aa).

Positions Val-34 to Asn-192 constitute an SIS domain. A substrate-binding site is contributed by Asn-49 to Gly-51. His-58 and Glu-62 together coordinate Zn(2+). Substrate is bound by residues Glu-62, Asn-91 to Asp-92, Ser-117 to Ser-119, Ser-122, and Gln-169. The Zn(2+) site is built by Gln-169 and His-177.

Belongs to the SIS family. GmhA subfamily. In terms of assembly, homotetramer. The cofactor is Zn(2+).

The protein localises to the cytoplasm. The enzyme catalyses 2 D-sedoheptulose 7-phosphate = D-glycero-alpha-D-manno-heptose 7-phosphate + D-glycero-beta-D-manno-heptose 7-phosphate. It participates in carbohydrate biosynthesis; D-glycero-D-manno-heptose 7-phosphate biosynthesis; D-glycero-alpha-D-manno-heptose 7-phosphate and D-glycero-beta-D-manno-heptose 7-phosphate from sedoheptulose 7-phosphate: step 1/1. Functionally, catalyzes the isomerization of sedoheptulose 7-phosphate in D-glycero-D-manno-heptose 7-phosphate. In Geobacter sp. (strain M21), this protein is Phosphoheptose isomerase.